The primary structure comprises 318 residues: MTSAYDKLHSTLDVKAFGRVAVLYGGKSAEREVSLKSGAAVIEALTSAGVDVVAIDVGDDLLARLQNEKIDRAFIILHGRGGEDGSMQGLLECLGIPYTGSGILASALAMDKLRTKQVWQSLGIPTPRHAVLASEQDCVAASAELGFPLIVKPAHEGSSIGMAKVNSEQELVAAWKDAAKYDSQVLVEQWIHGPEFTIAVLRGQVLPPIALGTPHVFYDYDAKYIANDTQYRIPCGLDSVKEQELIDLTARACDAIGIEGWGRLDVMQDEQGRFWLLEVNTAPGMTDHSLVPMAARAAGLDFQQLVLAILADSVATRG.

Residues 116–311 form the ATP-grasp domain; the sequence is KQVWQSLGIP…FQQLVLAILA (196 aa). 142–197 is a binding site for ATP; sequence SAELGFPLIVKPAHEGSSIGMAKVNSEQELVAAWKDAAKYDSQVLVEQWIHGPEFT. D265, E278, and N280 together coordinate Mg(2+).

The protein belongs to the D-alanine--D-alanine ligase family. Mg(2+) is required as a cofactor. Requires Mn(2+) as cofactor.

It localises to the cytoplasm. The catalysed reaction is 2 D-alanine + ATP = D-alanyl-D-alanine + ADP + phosphate + H(+). The protein operates within cell wall biogenesis; peptidoglycan biosynthesis. Functionally, cell wall formation. The protein is D-alanine--D-alanine ligase of Pseudomonas entomophila (strain L48).